The sequence spans 309 residues: Elongation factor Ts (309 aa).

Residues 82-85 (TDFV) form an involved in Mg(2+) ion dislocation from EF-Tu region.

It belongs to the EF-Ts family.

It is found in the cytoplasm. Functionally, associates with the EF-Tu.GDP complex and induces the exchange of GDP to GTP. It remains bound to the aminoacyl-tRNA.EF-Tu.GTP complex up to the GTP hydrolysis stage on the ribosome. This is Elongation factor Ts from Rickettsia felis (strain ATCC VR-1525 / URRWXCal2) (Rickettsia azadi).